A 447-amino-acid chain; its full sequence is Teichoic acids export ATP-binding protein TagH (447 aa).

An ABC transporter domain is found at 24–246 (DKLKTLFSVF…YRAFLHRYNH (223 aa)). Residue 60 to 67 (GLNGSGKS) coordinates ATP. Residues 247 to 447 (FTEPQKESYQ…QVLKLKEVTE (201 aa)) form a unknown region. Residues 359–393 (NAVKTTKTKPASTKESRQQEEVQPSPTNVPENNNS) form a disordered region. Composition is skewed to polar residues over residues 360–369 (AVKTTKTKPA) and 379–393 (EVQP…NNNS). One can recognise a LysM domain in the interval 398 to 442 (STYTVEVGDSVSLIAENHGLTIEQLQTLNPEIIEVPIYPGQVLKL).

Belongs to the ABC transporter superfamily. Teichoic acids exporter (TC 3.A.1.104.1) family. In terms of assembly, the complex is composed of two ATP-binding proteins (TagH) and two transmembrane proteins (TagG).

It is found in the cell membrane. It carries out the reaction ATP + H2O + teichoic acidSide 1 = ADP + phosphate + teichoic acidSide 2.. Its function is as follows. Part of the ABC transporter complex TagGH involved in teichoic acids export. Responsible for energy coupling to the transport system. The protein is Teichoic acids export ATP-binding protein TagH of Enterococcus faecalis (strain ATCC 700802 / V583).